The sequence spans 613 residues: MVTGNMLWSGEDKAMVASVLGKEAFEYLMSGSVSAECSLMAIGNDQNLQNKLSDLVERPNAANFSWNYAIFWQISRSKSGELVLGWGDGCCREPKEAEEREVKKILNLRLDDEGQQRMRKRVLQKLHMLFGGTDEDNYAFGLDRVTDTEMFFLASMYFSFPRGEGGPGKCFGSGKYLWLSDALTSNLDYCARSFLAKSAGMQTIALIPTDVGVVELGSVRSIPESLELLQNIKSCFSSFLSLVRDKQAAGIAAVPEKNEGNNPRLSNSGAVTERTDGNPKIFGHDLNSGTHFREKLAVRKAEERPWDMYQNGNRMPFVNARNGLNPASWAQFSNVKLGKPVELYAPPTPGHNLMNGGREEFRLNNFQHQKPAARMQIDFTGATSRTIVSPAHNVESEHSDVEASCKEDRAGPVDEKRPRKRGRKPANGREEPLNHVEAERQRREKLNQRFYALRAVVPNISKMDKASLLGDAIAYITELQKKLRDMESERELRLGSTSRDAITSEDSPSSEIQIRGPDINIEAANDEVIVRVSCSLETHPLSRIIQIFKEAQINVVESKLSAGNGTVYHTFVIKSSGSEQLTKEKLLAAFSSESNSLRQLSPKLHKVILPSLF.

Residues 48–130 (LQNKLSDLVE…RVLQKLHMLF (83 aa)) form a JAZ-interaction domain region. Disordered stretches follow at residues 256–285 (EKNE…FGHD) and 391–441 (AHNV…AERQ). Polar residues predominate over residues 260 to 270 (GNNPRLSNSGA). Basic and acidic residues-rich tracts occupy residues 394 to 417 (VESE…DEKR) and 427 to 441 (NGRE…AERQ). A basic motif; degenerate region spans residues 430–443 (EEPLNHVEAERQRR). Positions 430 to 479 (EEPLNHVEAERQRREKLNQRFYALRAVVPNISKMDKASLLGDAIAYITEL) constitute a bHLH domain. Residues 444–479 (EKLNQRFYALRAVVPNISKMDKASLLGDAIAYITEL) form a helix-loop-helix motif region. Residues 490–513 (RELRLGSTSRDAITSEDSPSSEIQ) form a disordered region. Over residues 495-512 (GSTSRDAITSEDSPSSEI) the composition is skewed to polar residues.

As to quaternary structure, interacts with MYC2 (via N-terminus). MTB1 competes with MED25 for binding to MYC2. Interacts (via N-terminus) with JAZ7.

It localises to the nucleus. Its function is as follows. Transcription factor that negatively regulates jasmonate (JA) signaling. Negatively regulates JA-dependent response to wounding, JA-induced expression of defense genes, JA-dependent responses against herbivorous insects, and JA-dependent resistance against Botrytis cinerea infection. Plays a positive role in resistance against the bacterial pathogen Pseudomonas syringae pv tomato DC3000. The polypeptide is Transcription factor MTB1 (Solanum lycopersicum (Tomato)).